We begin with the raw amino-acid sequence, 495 residues long: Glutamate--tRNA ligase (495 aa).

The 'HIGH' region motif lies at 12-22; that stretch reads PSPTGHLHIGN. The short motif at 259-263 is the 'KMSKS' region element; that stretch reads KLSKR. Lysine 262 contacts ATP.

It belongs to the class-I aminoacyl-tRNA synthetase family. Glutamate--tRNA ligase type 1 subfamily. As to quaternary structure, monomer.

It localises to the cytoplasm. It catalyses the reaction tRNA(Glu) + L-glutamate + ATP = L-glutamyl-tRNA(Glu) + AMP + diphosphate. Functionally, catalyzes the attachment of glutamate to tRNA(Glu) in a two-step reaction: glutamate is first activated by ATP to form Glu-AMP and then transferred to the acceptor end of tRNA(Glu). This is Glutamate--tRNA ligase from Pediococcus pentosaceus (strain ATCC 25745 / CCUG 21536 / LMG 10740 / 183-1w).